We begin with the raw amino-acid sequence, 550 residues long: Chaperonin GroEL 2 (550 aa).

Residues 30-33 (TLGP), lysine 51, 87-91 (DGTTT), glycine 415, and aspartate 496 contribute to the ATP site.

This sequence belongs to the chaperonin (HSP60) family. As to quaternary structure, forms a cylinder of 14 subunits composed of two heptameric rings stacked back-to-back. Interacts with the co-chaperonin GroES.

The protein localises to the cytoplasm. The enzyme catalyses ATP + H2O + a folded polypeptide = ADP + phosphate + an unfolded polypeptide.. Its function is as follows. Together with its co-chaperonin GroES, plays an essential role in assisting protein folding. The GroEL-GroES system forms a nano-cage that allows encapsulation of the non-native substrate proteins and provides a physical environment optimized to promote and accelerate protein folding. This chain is Chaperonin GroEL 2, found in Bradyrhizobium diazoefficiens (strain JCM 10833 / BCRC 13528 / IAM 13628 / NBRC 14792 / USDA 110).